Consider the following 127-residue polypeptide: MNIIEQIEKEEIARLTANKTIPAFAPGDTVIVNVNVVEGNRKRVQAYEGVVIAKRNRGLNSSFIVRKISSGEGVERTFQLYSPLIAGIEVKRRGDVRRAKLYYLRERSGKSARIKEKLVSKAAKAAQ.

This sequence belongs to the bacterial ribosomal protein bL19 family.

Functionally, this protein is located at the 30S-50S ribosomal subunit interface and may play a role in the structure and function of the aminoacyl-tRNA binding site. The sequence is that of Large ribosomal subunit protein bL19 from Cupriavidus pinatubonensis (strain JMP 134 / LMG 1197) (Cupriavidus necator (strain JMP 134)).